Reading from the N-terminus, the 555-residue chain is MRRSHARSRVKNSSSSKSDMDPIKFQIRSGNRAPSSSSTYTLTKPNSKHAKSNLLLTVGSISVVLGVLFLCYSILFSGGNLRGSLRYSVVIDGGSTGTRIHVFGYRIESGKPVFEFRGANYASLKLHPGLSAFADDPDGASVSLTELVEFAKGRVPKGMWIETEVRLMATAGMRLLELPVQEKILGVARRVLKSSGFLFRDEWASVISGSDEGVYAWVVANFALGSLGGDPLKTTGIVELGGASAQVTFVSSEPMPPEFSRTISFGNVTYNLYSHSFLHFGQNAAHDKLWGSLLSRDHNSAVEPTREKIFTDPCAPKGYNLDANTQKHLSGLLAEESRLSDSFQAGGNYSQCRSAALTILQDGNEKCSYQHCSIGSTFTPKLRGRFLATENFFYTSKFFGLGEKAWLSNMISAGERFCGEDWSKLRVKDPSLHEEDLLRYCFSSAYIVSLLHDTLGIPLDDERIGYANQAGDIPLDWALGAFIQQTATETSQHAASGNLHWFHALFSNHPKTLHYLIGIPILMTVLVYLVTKWRKPQLKTIYDLEKGRYIVTRIR.

Positions 1–10 (MRRSHARSRV) are enriched in basic residues. A disordered region spans residues 1–45 (MRRSHARSRVKNSSSSKSDMDPIKFQIRSGNRAPSSSSTYTLTKP). The Cytoplasmic portion of the chain corresponds to 1-55 (MRRSHARSRVKNSSSSKSDMDPIKFQIRSGNRAPSSSSTYTLTKPNSKHAKSNLL). Residues 28–45 (RSGNRAPSSSSTYTLTKP) show a composition bias toward polar residues. The helical transmembrane segment at 56-76 (LTVGSISVVLGVLFLCYSILF) threads the bilayer. The Extracellular portion of the chain corresponds to 77 to 512 (SGGNLRGSLR…HALFSNHPKT (436 aa)). 89–99 (VVIDGGSTGTR) contributes to the ATP binding site. E212 functions as the Proton acceptor in the catalytic mechanism. An ATP-binding site is contributed by 236 to 246 (GIVELGGASAQ). N-linked (GlcNAc...) asparagine glycosylation is found at N267 and N348. Residues 513-533 (LHYLIGIPILMTVLVYLVTKW) form a helical membrane-spanning segment. The Cytoplasmic portion of the chain corresponds to 534 to 555 (RKPQLKTIYDLEKGRYIVTRIR).

This sequence belongs to the GDA1/CD39 NTPase family. It depends on Ca(2+) as a cofactor. As to expression, detected in mature pollen grains (at the protein level). Also expressed in the veins and hydathode regions of rosette leaves.

Its subcellular location is the cytoplasmic vesicle membrane. It catalyses the reaction a ribonucleoside 5'-triphosphate + 2 H2O = a ribonucleoside 5'-phosphate + 2 phosphate + 2 H(+). Its function is as follows. Catalyzes the hydrolysis of phosphoanhydride bonds of nucleoside tri- and di-phosphates. Involved in the regulation of pollen and anther development. The polypeptide is Probable apyrase 6 (APY6) (Arabidopsis thaliana (Mouse-ear cress)).